A 336-amino-acid chain; its full sequence is Fructose-1,6-bisphosphatase class 1 (336 aa).

Positions 92, 115, 117, and 118 each coordinate Mg(2+). Residues 118-121, asparagine 211, tyrosine 244, 262-264, and lysine 274 contribute to the substrate site; these read DGSS and YLY. Residue glutamate 280 participates in Mg(2+) binding.

The protein belongs to the FBPase class 1 family. In terms of assembly, homotetramer. Mg(2+) is required as a cofactor.

The protein localises to the cytoplasm. The catalysed reaction is beta-D-fructose 1,6-bisphosphate + H2O = beta-D-fructose 6-phosphate + phosphate. The protein operates within carbohydrate biosynthesis; gluconeogenesis. This chain is Fructose-1,6-bisphosphatase class 1, found in Vibrio atlanticus (strain LGP32) (Vibrio splendidus (strain Mel32)).